The following is a 179-amino-acid chain: DELTA-actitoxin-Afr1a (179 aa).

The segment at 1 to 29 (SADVAGAVIDGAGLGFDVLKTVLEALGNV) is N-terminal alpha-helix that contributes to the pore. Residue R31 participates in an N-(acyl)-sphingosylphosphocholine binding. The N-acetyl-D-glucosamine 6-sulfate site is built by Y51 and R53. An N-(acyl)-sphingosylphosphocholine-binding residues include R53, S54, R79, G85, Y108, Y113, S114, W116, Y133, Y137, Y138, R144, and G168. Residues 105-120 (SVPYDYNWYSNWWNVR) are trp-rich region, which is important for the binding to lipid membrane. Residue Y138 participates in N-acetyl-D-glucosamine 6-sulfate binding. The short motif at 144–146 (RGD) is the Cell attachment site, crucial for protein stability element.

It belongs to the actinoporin family. Sea anemone subfamily. In terms of assembly, octamer or nonamer in membranes. Monomer in the soluble state.

It is found in the secreted. The protein localises to the nematocyst. Its subcellular location is the target cell membrane. Pore-forming toxin (PFT) that consists of a crown-shaped octamer or nonamer that forms cation-selective hydrophilic pores of about 1.5 nm (inside) and 13 nm (outside). It causes cardiac stimulation and cytolysis (EC(50)=1.6 nM on erythrocytes). Interestingly, the Phe-16 is crucial for hemolysis. Pore formation is a multi-step process that involves specific recognition of membrane sphingomyelin (but neither cholesterol nor phosphatidylcholine) using aromatic rich region and adjacent phosphocholine (POC) binding site, firm binding to the membrane (mainly driven by hydrophobic interactions) accompanied by the transfer of the N-terminal region to the lipid-water interface and finally pore formation after oligomerization of monomers. It is probable that a dimeric form is an assembly intermediate before the complete oligomerization. The formation of stable pores occurs only in vesicles composed of DOPC/SM (there is no oligomerization when the PFT is treated with vesicles of DOPC or SM alone). The transmembrane pore displays 8 lateral perforations, one at each subunit-subunit interface, partially occupied by the acyl-chain region of a bridging lipid. Each pore contains 24 lipid molecules, firmly bound to each subunit, that is, 3 lipids (L1, L2, L3, L4 and/or L5) are associated to each subunit. Lipid L1 bridges 2 subunits, whereas lipids L2 and L3 bind to sites at single subunit. The protein is DELTA-actitoxin-Afr1a of Actinia fragacea (Strawberry anemone).